A 201-amino-acid polypeptide reads, in one-letter code: Glycerol-3-phosphate acyltransferase (201 aa).

The next 5 membrane-spanning stretches (helical) occupy residues 10–30 (MLIG…GLIL), 60–80 (LAAA…LIAA), 86–106 (AAIA…WIGF), 116–136 (LGVL…AWIV), and 166–186 (ALAA…RANI).

The protein belongs to the PlsY family. In terms of assembly, probably interacts with PlsX.

It localises to the cell inner membrane. The catalysed reaction is an acyl phosphate + sn-glycerol 3-phosphate = a 1-acyl-sn-glycero-3-phosphate + phosphate. The protein operates within lipid metabolism; phospholipid metabolism. Functionally, catalyzes the transfer of an acyl group from acyl-phosphate (acyl-PO(4)) to glycerol-3-phosphate (G3P) to form lysophosphatidic acid (LPA). This enzyme utilizes acyl-phosphate as fatty acyl donor, but not acyl-CoA or acyl-ACP. In Brucella canis (strain ATCC 23365 / NCTC 10854 / RM-666), this protein is Glycerol-3-phosphate acyltransferase.